A 458-amino-acid polypeptide reads, in one-letter code: SH2 domain-containing protein 7 (458 aa).

The SH2 domain maps to 51-142 (WFHGFITRKQ…PFGETLAAAC (92 aa)). Disordered regions lie at residues 204 to 235 (RSVS…SPAG) and 267 to 326 (AGSL…TLGS). The segment covering 278–288 (PSGKLSDEDQN) has biased composition (basic and acidic residues). Positions 304-326 (QGSTMPYTSLGFSLPPSSETLGS) are enriched in polar residues.

This Mus musculus (Mouse) protein is SH2 domain-containing protein 7 (Sh2d7).